Reading from the N-terminus, the 950-residue chain is Protocadherin alpha-8 (950 aa).

Residues 1–29 (MVYHWRGDLGSWRLLLLLLLLAAWKVGSG) form the signal peptide. Cadherin domains lie at 30-133 (QLHY…PPVF), 157-242 (ASDA…APNF), 243-350 (EQSE…VPEI), 351-455 (ALTS…APAF), 456-565 (AQPE…APAL), and 581-678 (VPRS…APKA). Topologically, residues 30 to 697 (QLHYSVPEEA…GPEAALVDVN (668 aa)) are extracellular. N-linked (GlcNAc...) asparagine glycosylation is found at Asn257 and Asn265. N-linked (GlcNAc...) asparagine glycosylation occurs at Asn548. The helical transmembrane segment at 698–718 (VYLIIAICAVSSLLVLTLLLY) threads the bilayer. At 719-950 (TALRCSALPT…GNSTTDNSDQ (232 aa)) the chain is on the cytoplasmic side. PXXP repeat units follow at residues 774-777 (PCLP), 799-802 (PRQP), 832-835 (PGGP), 873-876 (PGNP), and 891-894 (PGSP). Residues 774-894 (PCLPPDLGSV…PDKFIIPGSP (121 aa)) are 5 X 4 AA repeats of P-X-X-P. The segment at 831–950 (GPGGPDQQWP…GNSTTDNSDQ (120 aa)) is disordered. Positions 909-923 (DKSDFITFGKKEETK) are enriched in basic and acidic residues.

The protein localises to the cell membrane. Functionally, potential calcium-dependent cell-adhesion protein. May be involved in the establishment and maintenance of specific neuronal connections in the brain. This Pan troglodytes (Chimpanzee) protein is Protocadherin alpha-8 (PCDHA8).